Consider the following 236-residue polypeptide: VIGGDECNINEHRFLVALYTSRTLFCGGTLINQEWVLTAAHCNMEDIQIKLGMHSKKVPNEDEQKRVPKEKFFCLSSKKLYLWDKDIMLIRLDSPVKNSAHIAPLSLPSSPPSVGSVCRTMGWGRISSTKETYPDVPHCVNINLLEYEMCRAPYPEFELPATSRTLCAGILEGGKDTCVGDSGGPLICNGQFQGIASWGDHPCAQPHKPAAYTKVFDHLDWIENIIAGNTDASCPP.

One can recognise a Peptidase S1 domain in the interval 1-227 (VIGGDECNIN…HLDWIENIIA (227 aa)). 6 cysteine pairs are disulfide-bonded: cysteine 7/cysteine 139, cysteine 26/cysteine 42, cysteine 74/cysteine 234, cysteine 118/cysteine 188, cysteine 150/cysteine 167, and cysteine 178/cysteine 203. Active-site charge relay system residues include histidine 41 and aspartate 86. The active-site Charge relay system is serine 182.

Belongs to the peptidase S1 family. Snake venom subfamily. As to quaternary structure, monomer. As to expression, expressed by the venom gland.

Its subcellular location is the secreted. Its function is as follows. Snake venom serine protease that may act in the hemostasis system of the prey. This is Snake venom serine protease pallase from Gloydius halys (Chinese water mocassin).